We begin with the raw amino-acid sequence, 277 residues long: MKKTQRKEIENVTNITGVRQIELWRRDDLQHPRLDEVAEEVPVALVYNGISHVVMMASPKDLEYFALGFSLSEGIIESPRDIFGMDVVPSCNGLEVQIELSSRRFMGLKERRRALAGRTGCGVCGVEQLNDIGKPVQPLPFTQTFDLNKLDDALRHLNDFQPVGQLTGCTHAAAWMLPSGELVGGHEDVGRHVALDKLLGRRSQEGESWQQGAVLVSSRASYEMVQKSAMCGVEILFAVSAATTLAVEVAERCNLTLVGFCKPGRATVYTHPQRLSN.

Catalysis depends on C121, which acts as the Cysteine persulfide intermediate. A Mo-bis(molybdopterin guanine dinucleotide)-binding site is contributed by 260–265; it reads FCKPGR.

The protein belongs to the FdhD family.

It is found in the cytoplasm. Its function is as follows. Required for formate dehydrogenase (FDH) activity. Acts as a sulfur carrier protein that transfers sulfur from IscS to the molybdenum cofactor prior to its insertion into FDH. This chain is Sulfur carrier protein FdhD, found in Escherichia coli O8 (strain IAI1).